The following is a 464-amino-acid chain: Soluble pyridine nucleotide transhydrogenase (464 aa).

35–44 serves as a coordination point for FAD; that stretch reads DSRRVVGGNC.

This sequence belongs to the class-I pyridine nucleotide-disulfide oxidoreductase family. FAD is required as a cofactor.

Its subcellular location is the cytoplasm. The catalysed reaction is NAD(+) + NADPH = NADH + NADP(+). Conversion of NADPH, generated by peripheral catabolic pathways, to NADH, which can enter the respiratory chain for energy generation. In Pseudomonas paraeruginosa (strain DSM 24068 / PA7) (Pseudomonas aeruginosa (strain PA7)), this protein is Soluble pyridine nucleotide transhydrogenase.